A 447-amino-acid chain; its full sequence is Elongation factor 1-alpha (447 aa).

A tr-type G domain is found at 5-230 (KVHINIVVIG…DNINEPKRPS (226 aa)). The segment at 14-21 (GHVDSGKS) is G1. 14-21 (GHVDSGKS) is a binding site for GTP. Lysine 55 is subject to N6,N6-dimethyllysine. Residues 70-74 (GITID) are G2. At lysine 79 the chain carries N6,N6,N6-trimethyllysine. Positions 91–94 (DAPG) are G3. Residues 91–95 (DAPGH) and 153–156 (NKMD) each bind GTP. The segment at 153-156 (NKMD) is G4. Lysine 187 is subject to N6,N6,N6-trimethyllysine. Residues 194 to 196 (SGF) are G5. An N6-methyllysine modification is found at lysine 261. Glutamate 289 carries the 5-glutamyl glycerylphosphorylethanolamine modification. Lysine 306 is modified (N6,N6,N6-trimethyllysine). Glutamate 362 bears the 5-glutamyl glycerylphosphorylethanolamine mark. Lysine 396 carries the post-translational modification N6,N6,N6-trimethyllysine.

This sequence belongs to the TRAFAC class translation factor GTPase superfamily. Classic translation factor GTPase family. EF-Tu/EF-1A subfamily.

It localises to the cytoplasm. In terms of biological role, this protein promotes the GTP-dependent binding of aminoacyl-tRNA to the A-site of ribosomes during protein biosynthesis. This chain is Elongation factor 1-alpha, found in Vicia faba (Broad bean).